The primary structure comprises 463 residues: Phosphoglucosamine mutase (463 aa).

Catalysis depends on Ser-108, which acts as the Phosphoserine intermediate. Mg(2+)-binding residues include Ser-108, Asp-247, Asp-249, and Asp-251. Ser-108 bears the Phosphoserine mark.

It belongs to the phosphohexose mutase family. It depends on Mg(2+) as a cofactor. Post-translationally, activated by phosphorylation.

The catalysed reaction is alpha-D-glucosamine 1-phosphate = D-glucosamine 6-phosphate. Catalyzes the conversion of glucosamine-6-phosphate to glucosamine-1-phosphate. In Nitrosospira multiformis (strain ATCC 25196 / NCIMB 11849 / C 71), this protein is Phosphoglucosamine mutase.